Here is a 424-residue protein sequence, read N- to C-terminus: Serpin E3 (424 aa).

An N-terminal signal peptide occupies residues 1-20 (MPPFLITLFLFHSCCLRANG). N-linked (GlcNAc...) asparagine glycosylation is present at Asn-46. The interval 143-174 (DLSEPNSTAIQTSEGASRETAGGGPSEGPGGW) is disordered. The span at 146–157 (EPNSTAIQTSEG) shows a compositional bias: polar residues. The span at 163–173 (AGGGPSEGPGG) shows a compositional bias: gly residues.

The protein belongs to the serpin family.

The protein resides in the secreted. Its function is as follows. Probable serine protease inhibitor. This chain is Serpin E3 (SERPINE3), found in Homo sapiens (Human).